The chain runs to 540 residues: MSSVLPTPVLPTPGKNINRGHFPDDFIFGAGTSSYQIEGAAREGGRGPSIWDTFTHTHPELIQDGSNGDTAVNSYNLYKEDIKIVKLMGLDAYRFSISWPRILPGGSINAGINQEGIKYYNNLIDELLANDIVPYVTLFHWDVPQALQDQYDGFLSDKIVDDFRDFAELCFWEFGDRVKNWITINEPQSYSDFFGVAYDTPPKAHALKASRLLVPTTVARPSKPARVFASTADPGTTTADQVYKVGHNLLLAHAAALKVYRDNFQDTQEGTFGMALVTQWMKPLNENNPADVEAASRAFDFKFGWFMQPLITGEYPKSMRQSLGPRLREFTRDQKKLLIGSYDYVGVNYYTATYVSSARPPNDNKAIFHTDGNFYTTDCKDGVLIGPLAGPAWLNIVPEGIYRCLQEIKAKYNNPVIYITENGVYEVNDTTKTLSEARVDTTRVDYLQDHLSYVLKARQQGVRVQGYFVWSLMDNWELRAGYTSRFGLIHVDYYNNFARYPKDSAIWFRNAFHKRLRIHVNKRPQEDDGAFDTPRKRLKK.

Residues Gln36, His140, 185–186 (NE), Tyr350, Glu421, Trp470, and Phe486 each bind a beta-D-glucoside. Glu186 (proton donor) is an active-site residue. Catalysis depends on Glu421, which acts as the Nucleophile.

Belongs to the glycosyl hydrolase 1 family.

It is found in the cytoplasm. Its subcellular location is the cytosol. It catalyses the reaction deacetylipecoside + H2O = deacetylipecoside aglycone + D-glucose. The enzyme catalyses deacetylisoipecoside + H2O = deacetylisoipecoside aglycone + D-glucose. It functions in the pathway alkaloid biosynthesis. Beta-glucosidase catalyzing deglucosylation on N-deacetylisoipecoside and N-deacetylipecoside. This Carapichea ipecacuanha (Ipecac) protein is Ipecac alkaloid beta-glucosidase 9.